The chain runs to 580 residues: Glutamine--tRNA ligase (580 aa).

Residues 41–51 carry the 'HIGH' region motif; that stretch reads PEPNGYLHIGH. ATP contacts are provided by residues 42 to 44 and 48 to 54; these read EPN and HIGHAKA. L-glutamine contacts are provided by aspartate 74 and tyrosine 218. ATP-binding positions include threonine 237, 285-286, and 293-295; these read RL and MSK. The 'KMSKS' region motif lies at 292–296; that stretch reads VMSKR.

The protein belongs to the class-I aminoacyl-tRNA synthetase family. As to quaternary structure, monomer.

It is found in the cytoplasm. The catalysed reaction is tRNA(Gln) + L-glutamine + ATP = L-glutaminyl-tRNA(Gln) + AMP + diphosphate. This Xylella fastidiosa (strain Temecula1 / ATCC 700964) protein is Glutamine--tRNA ligase.